Reading from the N-terminus, the 103-residue chain is UPF0145 protein CYB_1351 (103 aa).

Belongs to the UPF0145 family.

The chain is UPF0145 protein CYB_1351 from Synechococcus sp. (strain JA-2-3B'a(2-13)) (Cyanobacteria bacterium Yellowstone B-Prime).